Reading from the N-terminus, the 194-residue chain is Peptidyl-tRNA hydrolase (194 aa).

Tyrosine 16 provides a ligand contact to tRNA. Residue histidine 21 is the Proton acceptor of the active site. TRNA contacts are provided by phenylalanine 67, asparagine 69, and asparagine 115.

It belongs to the PTH family. Monomer.

Its subcellular location is the cytoplasm. The catalysed reaction is an N-acyl-L-alpha-aminoacyl-tRNA + H2O = an N-acyl-L-amino acid + a tRNA + H(+). Its function is as follows. Hydrolyzes ribosome-free peptidyl-tRNAs (with 1 or more amino acids incorporated), which drop off the ribosome during protein synthesis, or as a result of ribosome stalling. Catalyzes the release of premature peptidyl moieties from peptidyl-tRNA molecules trapped in stalled 50S ribosomal subunits, and thus maintains levels of free tRNAs and 50S ribosomes. This is Peptidyl-tRNA hydrolase from Shigella dysenteriae serotype 1 (strain Sd197).